The following is a 337-amino-acid chain: Neurogenic differentiation factor 6 (337 aa).

A disordered region spans residues leucine 43–lysine 82. Positions glutamate 54–asparagine 71 are enriched in acidic residues. The short motif at arginine 80–lysine 86 is the Nuclear localization signal element. One can recognise a bHLH domain in the interval phenylalanine 94–leucine 146.

Efficient DNA binding requires dimerization with another bHLH protein.

The protein localises to the nucleus. In terms of biological role, activates E box-dependent transcription in collaboration with TCF3/E47. May be a trans-acting factor involved in the development and maintenance of the mammalian nervous system. Transactivates the promoter of its own gene. The polypeptide is Neurogenic differentiation factor 6 (NEUROD6) (Homo sapiens (Human)).